A 513-amino-acid polypeptide reads, in one-letter code: MSTARPRIITSKAPLLPQQTTPEQRYWRQYTSAQLVKEHNSVTHISFNPQHPHDFAVTSSTRVQIFSSRTRQVIKTFSRFKDVVYSASFRSDGKLLCAGDATGLVSVYDSYNPRTILLSINASTHPTHVTKFHTQDNKILATASDDRVTRLWDISNAYEPQLELTGATDYVRTLSFIPAAPHLVATGSYDGLIRLYDTRSSGSTPIYSLNHDQPVENVIAVSPTQIVSCGGNNFKVWDLTSNKKLYERGNFNKAVTCLDYVENFDSPMQSALIASSLDGHVKVFDPLDNFQVKFGWKFSGPVLSCAVSPSTAQGNRHLVAGLSSGLLAIRTKKKEKRSSDKENAPASFNKNAKSNNFQRMMRGSEYQGDQEHIIHNDKVRSQRRMRAFERNINQFKWSEALDNAFVPGMAKELTLTVLQELRKRGKVRVALYGRDESTLEPLLNWCLKGIEDVRSASIVADWVAVVLELYGNTLESSPVLQELMIDLKTKVRHEIHKSKEAQRIEGMLQLLTS.

6 WD repeats span residues K37–S78, R79–L118, T124–L162, G166–I206, N210–E247, and N250–F294. The interval K332–S354 is disordered.

In terms of assembly, interacts with snoRNA U3. Interacts with MPP10. Component of the ribosomal small subunit (SSU) processome composed of at least 40 protein subunits and snoRNA U3. In the absence of snoRNA3, forms a complex with other t-UTPs. This complex can associate with pre-18S ribosomal RNAs.

The protein resides in the nucleus. Its subcellular location is the nucleolus. Functionally, involved in nucleolar processing of pre-18S ribosomal RNA. Required for optimal pre-ribosomal RNA transcription by RNA polymerase I together with a subset of U3 proteins required for transcription (t-UTPs). This chain is U3 small nucleolar RNA-associated protein 15 (UTP15), found in Saccharomyces cerevisiae (strain ATCC 204508 / S288c) (Baker's yeast).